The primary structure comprises 558 residues: Glucose-6-phosphate isomerase (558 aa).

Glu-362 serves as the catalytic Proton donor. Residues His-393 and Lys-523 contribute to the active site.

Belongs to the GPI family.

Its subcellular location is the cytoplasm. It catalyses the reaction alpha-D-glucose 6-phosphate = beta-D-fructose 6-phosphate. The protein operates within carbohydrate degradation; glycolysis; D-glyceraldehyde 3-phosphate and glycerone phosphate from D-glucose: step 2/4. This chain is Glucose-6-phosphate isomerase (Pgi), found in Drosophila melanogaster (Fruit fly).